Reading from the N-terminus, the 316-residue chain is Beta-ketoacyl-[acyl-carrier-protein] synthase III (316 aa).

Catalysis depends on residues Cys-112 and His-243. An ACP-binding region spans residues 244 to 248; sequence QANLR. Asn-273 is an active-site residue.

Belongs to the thiolase-like superfamily. FabH family. Homodimer.

The protein localises to the cytoplasm. The enzyme catalyses malonyl-[ACP] + acetyl-CoA + H(+) = 3-oxobutanoyl-[ACP] + CO2 + CoA. It participates in lipid metabolism; fatty acid biosynthesis. In terms of biological role, catalyzes the condensation reaction of fatty acid synthesis by the addition to an acyl acceptor of two carbons from malonyl-ACP. Catalyzes the first condensation reaction which initiates fatty acid synthesis and may therefore play a role in governing the total rate of fatty acid production. Possesses both acetoacetyl-ACP synthase and acetyl transacylase activities. Its substrate specificity determines the biosynthesis of branched-chain and/or straight-chain of fatty acids. This chain is Beta-ketoacyl-[acyl-carrier-protein] synthase III, found in Yersinia pseudotuberculosis serotype O:1b (strain IP 31758).